Consider the following 122-residue polypeptide: uncharacterized protein (122 aa).

This is an uncharacterized protein from Saccharomyces cerevisiae (strain ATCC 204508 / S288c) (Baker's yeast).